A 606-amino-acid polypeptide reads, in one-letter code: Gamma-aminobutyric acid receptor subunit beta (606 aa).

The N-terminal stretch at 1–44 is a signal peptide; it reads MSDSKMDKLARMAPLPRTPLLTIWLAINMALIAQETGHKRIHTV. Residues 45–268 lie on the Extracellular side of the membrane; the sequence is QAATGGGSML…CEIQFVRSMG (224 aa). N-linked (GlcNAc...) asparagine glycosylation occurs at Asn-58. Residues Cys-185 and Cys-199 are joined by a disulfide bond. A glycan (N-linked (GlcNAc...) asparagine) is linked at Asn-253. Transmembrane regions (helical) follow at residues 269 to 291, 297 to 316, and 333 to 356; these read YYLI…SFWL, PARV…LMSS, and YLGT…YMAK. Residues 357-568 are Cytoplasmic-facing; it reads RIQMRKQRFM…LGITPSDIDK (212 aa). Disordered stretches follow at residues 376-451 and 482-542; these read KQQL…VSNR and HDPK…AAVP. Positions 381 to 395 are enriched in low complexity; it reads GANQQQANPNPNANV. Residues 396 to 425 are compositionally biased toward gly residues; sequence GGPGGVGVGPGGPGGPGGGVNVGVGMGMGP. A compositionally biased stretch (basic residues) spans 430-443; sequence GHGHHAHSHGHPHA. Residues 499–536 are compositionally biased toward gly residues; sequence GGRGGPQSHGPGPGQGGGPPGGGGGGGGGGGPPEGGGD. A helical membrane pass occupies residues 569–590; it reads YSRIVFPVCFVCFNLMYWIIYL.

The protein belongs to the ligand-gated ion channel (TC 1.A.9) family. Gamma-aminobutyric acid receptor (TC 1.A.9.5) subfamily.

It is found in the postsynaptic cell membrane. It localises to the cell membrane. Functionally, GABA, an inhibitory neurotransmitter, mediates neuronal inhibition by binding to the GABA receptor and opening an integral chloride channel. This is Gamma-aminobutyric acid receptor subunit beta (Rdl) from Drosophila simulans (Fruit fly).